A 659-amino-acid polypeptide reads, in one-letter code: Anoctamin-10 (659 aa).

At Met-1–Thr-207 the chain is on the cytoplasmic side. The chain crosses the membrane as a helical span at residues Ile-208–Ile-228. Over Gly-229–Tyr-240 the chain is Extracellular. A helical membrane pass occupies residues Asp-241–Trp-261. Residues Lys-262 to Leu-316 are Cytoplasmic-facing. The chain crosses the membrane as a helical span at residues Val-317–Phe-337. The Extracellular portion of the chain corresponds to Asp-338–Ser-352. Residues Glu-353–Met-373 traverse the membrane as a helical segment. Over Asn-374 to Leu-400 the chain is Cytoplasmic. Residues Val-401–Phe-421 form a helical membrane-spanning segment. Residues Val-422–Glu-500 are Extracellular-facing. The helical transmembrane segment at Leu-501–Phe-521 threads the bilayer. At Ala-522–Gly-553 the chain is on the cytoplasmic side. The chain crosses the membrane as a helical span at residues Val-554–Ile-574. The Extracellular portion of the chain corresponds to Gly-575–Asp-590. Residues Leu-591–Phe-611 traverse the membrane as a helical segment. Topologically, residues Ala-612–Thr-659 are cytoplasmic.

It belongs to the anoctamin family. Predominant expression seen in epithelial tissues.

It localises to the cell membrane. Its function is as follows. Does not exhibit calcium-activated chloride channel (CaCC) activity. Can inhibit the activity of ANO1. The chain is Anoctamin-10 (Ano10) from Mus musculus (Mouse).